The following is a 42-amino-acid chain: Conodipine-M beta chain (42 aa).

In terms of assembly, heterodimer of an alpha and a beta chains; probably disulfide-linked. Expressed by the venom duct.

Its subcellular location is the secreted. Functionally, heterodimer: conodipine-M catalyzes the calcium-dependent hydrolysis of the 2-acyl groups in 3-sn-phosphoglycerides. This activity may be supported by the alpha chain. Conodipine-M inhibits the binding of isradipine (a ligand specific for L-type calcium channel) to L-type calcium channels. The sequence is that of Conodipine-M beta chain from Conus magus (Magical cone).